Consider the following 133-residue polypeptide: Hydrogenase maturation factor HypA (133 aa).

His2 provides a ligand contact to Ni(2+). Positions 73, 75, 105, and 108 each coordinate Zn(2+).

This sequence belongs to the HypA/HybF family.

Its function is as follows. Involved in the maturation of [NiFe] hydrogenases. Required for nickel insertion into the metal center of the hydrogenase. The chain is Hydrogenase maturation factor HypA from Methanosarcina acetivorans (strain ATCC 35395 / DSM 2834 / JCM 12185 / C2A).